The primary structure comprises 529 residues: Zinc finger protein 490 (529 aa).

Residues 1-53 (MRRNSSLSFQMERPLEEQVQSKWSSSQGRTGTGGSDVLQMQNSEHHGQSIKTQ) form a disordered region. One can recognise a KRAB domain in the interval 57–132 (ISLEDVAVNF…ALCENKEDCP (76 aa)). C2H2-type zinc fingers lie at residues 156–178 (CDCSVCGEVFMHQVSLNRHMRSH), 194–216 (HKCKECGKTFTRSSSIRTHERIH), 222–244 (YECKECGKAFAFLFSFRNHIRIH), 250–272 (YECKECGKAFRYLTALRRHEKNH), 278–300 (YKCKQCGKAFIYYQPFLTHERTH), 306–328 (YECKQCGKAFSCPTYLRSHEKTH), 334–356 (FVCRECGRAFFSHSSLRKHVKTH), 362–384 (YTCKKCGEAFKSSSSCEVHERTH), 390–412 (YECKQCGKAFNSSSYLQLHERVH), 418–440 (YECKECGKAFLYSTHFRIHERTH), 446–468 (YECKQCGRVFIYFSHLRRHERSH), 474–496 (CECKQCGKAFTCLNSLKVHKRIH), and 502–524 (FQCRQCGKAFSYSKSLHVHERTH).

The protein belongs to the krueppel C2H2-type zinc-finger protein family.

The protein localises to the nucleus. Functionally, may be involved in transcriptional regulation. This Homo sapiens (Human) protein is Zinc finger protein 490 (ZNF490).